Here is a 948-residue protein sequence, read N- to C-terminus: Hexagonally packed intermediate-layer surface protein (948 aa).

The first 17 residues, 1 to 17 (MKKNIALMALTGILTLA), serve as a signal peptide directing secretion. 2 cysteine pairs are disulfide-bonded: C168–C187 and C554–C666.

Post-translationally, glycosylated. Contains tightly bound reducing sugars (six per polypeptide chain) and fatty acids (covalently bound and located in the N-terminal region).

It is found in the secreted. The protein localises to the cell wall. The protein resides in the S-layer. Functionally, shape maintenance, possible protection from noxious enzymes or exogenous and unsettling DNA, and may mediate homotypic cell-cell contacts. This is Hexagonally packed intermediate-layer surface protein (hpi) from Deinococcus radiodurans (strain ATCC 13939 / DSM 20539 / JCM 16871 / CCUG 27074 / LMG 4051 / NBRC 15346 / NCIMB 9279 / VKM B-1422 / R1).